The chain runs to 471 residues: Collagen alpha-3(IV) chain (471 aa).

Residues 1–238 (GLPGRKGPVG…KGKPGDTGPP (238 aa)) are triple-helical region. The interval 1-241 (GLPGRKGPVG…PGDTGPPAAG (241 aa)) is disordered. Over residues 52-61 (MPGPPGPPGS) the composition is skewed to pro residues. The short motif at 106 to 108 (RGD) is the Cell attachment site element. Residues 127 to 141 (PGPPGPPGQSGPKGP) are compositionally biased toward pro residues. Low complexity predominate over residues 165–174 (SAGEPGMQGE). The span at 175–187 (PGPPGPPGDPGPC) shows a compositional bias: pro residues. Hydroxyproline is present on residues proline 232 and proline 238. Positions 246–470 (GFVFTRHSQT…SRCQVCMKMR (225 aa)) constitute a Collagen IV NC1 domain. Cystine bridges form between cysteine 261–cysteine 352, cysteine 294–cysteine 349, cysteine 306–cysteine 312, cysteine 371–cysteine 466, cysteine 405–cysteine 463, and cysteine 417–cysteine 423. Residue methionine 334 forms an S-Lysyl-methionine sulfilimine (Met-Lys) (interchain with K-452) linkage. An S-Lysyl-methionine sulfilimine (Lys-Met) (interchain with M-334) cross-link involves residue lysine 452.

The protein belongs to the type IV collagen family. In terms of assembly, there are six type IV collagen isoforms, alpha 1(IV)-alpha 6(IV), each of which can form a triple helix structure with 2 other chains to generate type IV collagen network. The alpha 3(IV) chain forms a triple helical protomer with alpha 4(IV) and alpha 5(IV); this triple helical structure dimerizes through NC1-NC1 domain interactions such that the alpha 3(IV), alpha 4(IV) and alpha 5(IV) chains of one protomer connect with the alpha 5(IV), alpha 4(IV) and alpha 3(IV) chains of the opposite promoter, respectively. Interacts with ITGB3. Associates with LAMB2 at the neuromuscular junction and in GBM. Prolines at the third position of the tripeptide repeating unit (G-X-Y) are hydroxylated in some or all of the chains. In terms of processing, type IV collagens contain numerous cysteine residues which are involved in inter- and intramolecular disulfide bonding. 12 of these, located in the NC1 domain, are conserved in all known type IV collagens. Post-translationally, the trimeric structure of the NC1 domains is stabilized by covalent bonds between Lys and Met residues. Phosphorylated. Thought to be phosphorylated by CERT, but CERT does not have kinase activity.

The protein resides in the secreted. It is found in the extracellular space. It localises to the extracellular matrix. The protein localises to the basement membrane. Its function is as follows. Type IV collagen is the major structural component of glomerular basement membranes (GBM), forming a 'chicken-wire' meshwork together with laminins, proteoglycans and entactin/nidogen. This is Collagen alpha-3(IV) chain (COL4A3) from Bos taurus (Bovine).